A 439-amino-acid polypeptide reads, in one-letter code: MTIYKDARNGRITEEMKKIAEVEGVDPEFVRRGLAAGRIVLLRNLKRADRVKTVAVGEGMLTKVNANIGTSNTLIDVNMEVEKAKIAKKYGADTVMDLSTGGNLDVIRRKIMEAAEPLPLGTVPIYQAFMDVATRKGAGLYMTEDDILNTIEKHLKDGVDFMTLHAALTRDLAAKAVKSDRAEPIVSRGGSILAAWMLEHGKENPLLSNFDYILEMFKEYDAVISLGDSLRPGALEDAHDEYHLSELMVNARLVKRAREAGVQVMLEGPGHVPLDRVVADVKLAKRLTEGAPYYILGPLVTDIAAGYDHIAGAIGGAIAAAHGADFLCYVTPAEHLNLPNPEQVREGVIAFRIAAHAADIVKYPDRAMKVDIEMGRCRGRLDWECMIRLSLDPDKAREIRNQYGPTSIKSCNMCGSLCVFLLLDKWRRKKDEELHAPLA.

Substrate-binding positions include N67, M96, Y126, H165, 187–189 (SRG), 228–231 (DSLR), and E267. H271 contacts Zn(2+). Y294 is a substrate binding site. H335 serves as a coordination point for Zn(2+). [4Fe-4S] cluster-binding residues include C411, C414, and C418.

It belongs to the ThiC family. [4Fe-4S] cluster is required as a cofactor.

The catalysed reaction is 5-amino-1-(5-phospho-beta-D-ribosyl)imidazole + S-adenosyl-L-methionine = 4-amino-2-methyl-5-(phosphooxymethyl)pyrimidine + CO + 5'-deoxyadenosine + formate + L-methionine + 3 H(+). The protein operates within cofactor biosynthesis; thiamine diphosphate biosynthesis. Functionally, catalyzes the synthesis of the hydroxymethylpyrimidine phosphate (HMP-P) moiety of thiamine from aminoimidazole ribotide (AIR) in a radical S-adenosyl-L-methionine (SAM)-dependent reaction. In Ignicoccus hospitalis (strain KIN4/I / DSM 18386 / JCM 14125), this protein is Phosphomethylpyrimidine synthase.